The chain runs to 196 residues: Probable malonic semialdehyde reductase RutE (196 aa).

The protein belongs to the nitroreductase family. HadB/RutE subfamily. The cofactor is FMN.

It carries out the reaction 3-hydroxypropanoate + NADP(+) = 3-oxopropanoate + NADPH + H(+). May reduce toxic product malonic semialdehyde to 3-hydroxypropionic acid, which is excreted. This is Probable malonic semialdehyde reductase RutE from Klebsiella pneumoniae (strain 342).